The primary structure comprises 275 residues: Formamidopyrimidine-DNA glycosylase (275 aa).

Catalysis depends on Pro-2, which acts as the Schiff-base intermediate with DNA. The Proton donor role is filled by Glu-3. Lys-58 functions as the Proton donor; for beta-elimination activity in the catalytic mechanism. Residues His-93, Arg-111, and Arg-156 each coordinate DNA. Residues 241 to 275 (FVYDRAGQPCRVCGTPIRQIVQGQRSTYYCPTCQR) form an FPG-type zinc finger. Catalysis depends on Arg-265, which acts as the Proton donor; for delta-elimination activity.

It belongs to the FPG family. As to quaternary structure, monomer. Requires Zn(2+) as cofactor.

It catalyses the reaction Hydrolysis of DNA containing ring-opened 7-methylguanine residues, releasing 2,6-diamino-4-hydroxy-5-(N-methyl)formamidopyrimidine.. The enzyme catalyses 2'-deoxyribonucleotide-(2'-deoxyribose 5'-phosphate)-2'-deoxyribonucleotide-DNA = a 3'-end 2'-deoxyribonucleotide-(2,3-dehydro-2,3-deoxyribose 5'-phosphate)-DNA + a 5'-end 5'-phospho-2'-deoxyribonucleoside-DNA + H(+). Involved in base excision repair of DNA damaged by oxidation or by mutagenic agents. Acts as a DNA glycosylase that recognizes and removes damaged bases. Has a preference for oxidized purines, such as 7,8-dihydro-8-oxoguanine (8-oxoG). Has AP (apurinic/apyrimidinic) lyase activity and introduces nicks in the DNA strand. Cleaves the DNA backbone by beta-delta elimination to generate a single-strand break at the site of the removed base with both 3'- and 5'-phosphates. In Burkholderia cenocepacia (strain ATCC BAA-245 / DSM 16553 / LMG 16656 / NCTC 13227 / J2315 / CF5610) (Burkholderia cepacia (strain J2315)), this protein is Formamidopyrimidine-DNA glycosylase.